A 589-amino-acid chain; its full sequence is Intermediate filament protein ifb-1 (589 aa).

The disordered stretch occupies residues 1-42 (MSSHKESSEYEMQYRSTIQPRTAVRSQSRQSGNYVSGGNGAG). The segment at 8–84 (SEYEMQYRST…LEATDKEKKT (77 aa)) is head. Polar residues predominate over residues 14-30 (YRSTIQPRTAVRSQSRQ). The IF rod domain maps to 81–433 (EKKTLQGLND…KMLEGEETRV (353 aa)). The tract at residues 85–116 (LQGLNDRLGNYIDRVKKLEEQNRKLVADLDEL) is coil 1A. The tract at residues 117 to 130 (RGKWGKDTSEIKIK) is linker 1. The segment at 131-268 (YSESLSTARK…RVHEQEVKEL (138 aa)) is coil 1B. Residues 269 to 285 (QALLAQAPADTREFFKN) are linker 12. The coil 2 stretch occupies residues 286–433 (ELALAIRDIK…KMLEGEETRV (148 aa)). Residues 434–588 (GLTQMVEQAV…THTQKTIQSG (155 aa)) are tail. Residues 444–470 (KTHSLQQQENTDSTRSVRGEVSTKTTF) form a disordered region. Residues 466–584 (TKTTFQRSAK…EERATHTQKT (119 aa)) enclose the LTD domain.

It belongs to the intermediate filament family. Forms some heteromeric filaments with ifa-1, ifa-2, ifa-3 and probably ifa-4. Expressed in epidermal cells. Expressed in amphid sensory neurons, the excretory cells, the vulva, the uterus, the rectum and some neurons of the tail. Isoform a and isoform b display a similar pattern of expression. Isoform a is predominant in pharyngeal tonofilaments.

The protein resides in the cytoplasm. Cytoplasmic intermediate filaments provide mechanical strength to cells. Essential protein, involved in attachment structures in epidermal cells that connect muscles to the external cuticle. Required in morphogenesis and epidermal integrity. Probable component of embryonic epidermal attachment structures. Functions in larval muscle attachment independently of ifa-2. This Caenorhabditis elegans protein is Intermediate filament protein ifb-1 (ifb-1).